Reading from the N-terminus, the 177-residue chain is ADP-ribosylation factor-like protein 3 (177 aa).

A lipid anchor (N-myristoyl glycine) is attached at Gly-2. GTP is bound by residues 23–31 (GLDNAGKTT), 125–128 (NKQD), and Ala-159.

The protein belongs to the small GTPase superfamily. Arf family.

It localises to the golgi apparatus membrane. The protein resides in the cytoplasm. Its subcellular location is the cytoskeleton. It is found in the spindle. The protein localises to the nucleus. It localises to the microtubule organizing center. Small GTP-binding protein which cycles between an inactive GDP-bound and an active GTP-bound form, and the rate of cycling is regulated by guanine nucleotide exchange factors (GEF) and GTPase-activating proteins (GAP). Required for normal cytokinesis and cilia signaling. Required for targeting proteins to the ciliary membrane by releasing myristoylated protein from unc119 cargo adapters into the cilium. This is ADP-ribosylation factor-like protein 3 from Chlamydomonas reinhardtii (Chlamydomonas smithii).